Reading from the N-terminus, the 706-residue chain is Fatty acid oxidation complex subunit alpha (706 aa).

The interval 1-188 is enoyl-CoA hydratase; it reads MEKTFNLTRR…KMGLVNDVVP (188 aa). Positions 308–706 are 3-hydroxyacyl-CoA dehydrogenase; that stretch reads RKVKKAVILG…TMARENVSFF (399 aa).

This sequence in the N-terminal section; belongs to the enoyl-CoA hydratase/isomerase family. In the central section; belongs to the 3-hydroxyacyl-CoA dehydrogenase family. Heterotetramer of two alpha chains (FadJ) and two beta chains (FadI).

It is found in the cytoplasm. It carries out the reaction a (3S)-3-hydroxyacyl-CoA = a (2E)-enoyl-CoA + H2O. The enzyme catalyses a 4-saturated-(3S)-3-hydroxyacyl-CoA = a (3E)-enoyl-CoA + H2O. It catalyses the reaction a (3S)-3-hydroxyacyl-CoA + NAD(+) = a 3-oxoacyl-CoA + NADH + H(+). The catalysed reaction is (3S)-3-hydroxybutanoyl-CoA = (3R)-3-hydroxybutanoyl-CoA. The protein operates within lipid metabolism; fatty acid beta-oxidation. In terms of biological role, catalyzes the formation of a hydroxyacyl-CoA by addition of water on enoyl-CoA. Also exhibits 3-hydroxyacyl-CoA epimerase and 3-hydroxyacyl-CoA dehydrogenase activities. This is Fatty acid oxidation complex subunit alpha from Shewanella sp. (strain W3-18-1).